We begin with the raw amino-acid sequence, 71 residues long: Translation initiation factor IF-1 (71 aa).

The S1-like domain maps to 1 to 71 (MAKQSAIEQD…LSKARITYRY (71 aa)).

It belongs to the IF-1 family. In terms of assembly, component of the 30S ribosomal translation pre-initiation complex which assembles on the 30S ribosome in the order IF-2 and IF-3, IF-1 and N-formylmethionyl-tRNA(fMet); mRNA recruitment can occur at any time during PIC assembly.

The protein localises to the cytoplasm. Its function is as follows. One of the essential components for the initiation of protein synthesis. Stabilizes the binding of IF-2 and IF-3 on the 30S subunit to which N-formylmethionyl-tRNA(fMet) subsequently binds. Helps modulate mRNA selection, yielding the 30S pre-initiation complex (PIC). Upon addition of the 50S ribosomal subunit IF-1, IF-2 and IF-3 are released leaving the mature 70S translation initiation complex. This Flavobacterium psychrophilum (strain ATCC 49511 / DSM 21280 / CIP 103535 / JIP02/86) protein is Translation initiation factor IF-1.